The following is a 310-amino-acid chain: Endo-1,4-beta-xylanase B (310 aa).

The N-terminal stretch at 1 to 19 is a signal peptide; sequence MISLSSVAIALTTVVGALA. The region spanning 33–223 is the GH11 domain; it reads AITSSQTGTN…SSGSASMTVS (191 aa). The Nucleophile role is filled by Glu119. Catalysis depends on Glu210, which acts as the Proton donor. The span at 218–227 shows a compositional bias: low complexity; it reads ASMTVSAGSS. Residues 218–274 are disordered; sequence ASMTVSAGSSSSGGSGSGSGSGSGSGSGSGSQTTTAGSSTGTGTGSGSGSGSGGSGG. Residues 228–246 are compositionally biased toward gly residues; that stretch reads SSGGSGSGSGSGSGSGSGS. Over residues 247–256 the composition is skewed to low complexity; that stretch reads GSQTTTAGSS. Positions 257–274 are enriched in gly residues; the sequence is TGTGTGSGSGSGSGGSGG. The CBM1 domain maps to 275-310; it reads NCAAQWGQCGGQGWNGPTCCSSGTCKASNQWYSQCL.

This sequence belongs to the glycosyl hydrolase 11 (cellulase G) family.

The protein localises to the secreted. It carries out the reaction Endohydrolysis of (1-&gt;4)-beta-D-xylosidic linkages in xylans.. It participates in glycan degradation; xylan degradation. Endo-1,4-beta-xylanase involved in the hydrolysis of xylan, a major structural heterogeneous polysaccharide found in plant biomass representing the second most abundant polysaccharide in the biosphere, after cellulose. Hydrolyzes birchwood xylan, beechwood xylan, and oat spelt xylan to produce short-chain xylooligosaccharides, xylopentaose, xylotriose, and xylobiose as the main products. This is Endo-1,4-beta-xylanase B (xynB) from Penicillium oxalicum.